Here is a 142-residue protein sequence, read N- to C-terminus: Transcriptional regulator MraZ (142 aa).

2 SpoVT-AbrB domains span residues 5–51 and 77–120; these read ASSL…PRPE and AMDV…DKAT.

The protein belongs to the MraZ family. Forms oligomers.

The protein resides in the cytoplasm. Its subcellular location is the nucleoid. This Variovorax paradoxus (strain S110) protein is Transcriptional regulator MraZ.